Consider the following 419-residue polypeptide: Zinc finger protein Pegasus (419 aa).

C2H2-type zinc fingers lie at residues 79 to 101 (LKCR…IRIH), 107 to 129 (HRCH…MRSH), and 135 to 158 (YKCE…RRRH). 2 disordered regions span residues 203–255 (LQKP…DQDM) and 310–360 (SVNT…TPVQ). Residues 208-228 (SEQHHLGDFTHDLPPHAHLHQ) are compositionally biased toward basic and acidic residues. Polar residues-rich tracts occupy residues 310–320 (SVNTAQASSPI) and 341–360 (ERTS…TPVQ). 2 C2H2-type zinc fingers span residues 366 to 388 (HHCP…MGCH) and 394 to 418 (FQCN…RGQH).

This sequence belongs to the Ikaros C2H2-type zinc-finger protein family. As to quaternary structure, probably self-associates.

It localises to the nucleus. Transcriptional repressor that binds the core 5'GNNTGTNG-3' DNA consensus sequence. The polypeptide is Zinc finger protein Pegasus (ikzf5) (Danio rerio (Zebrafish)).